Reading from the N-terminus, the 124-residue chain is UPF0102 protein Meso_4010 (124 aa).

The protein belongs to the UPF0102 family.

The protein is UPF0102 protein Meso_4010 of Chelativorans sp. (strain BNC1).